Consider the following 75-residue polypeptide: UPF0154 protein MMOB4450 (75 aa).

Residues 7 to 27 (IGLIVGLSILFTIVGLVVGFF) form a helical membrane-spanning segment.

It belongs to the UPF0154 family.

The protein resides in the cell membrane. In Mycoplasma mobile (strain ATCC 43663 / 163K / NCTC 11711) (Mesomycoplasma mobile), this protein is UPF0154 protein MMOB4450.